The following is a 344-amino-acid chain: Anthranilate phosphoribosyltransferase (344 aa).

5-phospho-alpha-D-ribose 1-diphosphate is bound by residues Gly-80, 83-84 (GD), Thr-88, 90-93 (NIST), 108-116 (KHGNRSVSS), and Ser-120. Gly-80 contributes to the anthranilate binding site. Ser-92 contributes to the Mg(2+) binding site. Asn-111 lines the anthranilate pocket. Arg-166 serves as a coordination point for anthranilate. Positions 225 and 226 each coordinate Mg(2+).

This sequence belongs to the anthranilate phosphoribosyltransferase family. In terms of assembly, homodimer. The cofactor is Mg(2+).

It carries out the reaction N-(5-phospho-beta-D-ribosyl)anthranilate + diphosphate = 5-phospho-alpha-D-ribose 1-diphosphate + anthranilate. It participates in amino-acid biosynthesis; L-tryptophan biosynthesis; L-tryptophan from chorismate: step 2/5. In terms of biological role, catalyzes the transfer of the phosphoribosyl group of 5-phosphorylribose-1-pyrophosphate (PRPP) to anthranilate to yield N-(5'-phosphoribosyl)-anthranilate (PRA). The protein is Anthranilate phosphoribosyltransferase of Petrotoga mobilis (strain DSM 10674 / SJ95).